A 295-amino-acid chain; its full sequence is Large ribosomal subunit protein uL15m (295 aa).

The transit peptide at 1–20 (MAGTARGCGTSLDLLRSLPR) directs the protein to the mitochondrion. The disordered stretch occupies residues 21–67 (VSLANLKPSPNSRKRERRPRDRRRGRKCGRGHKGERQRGTRPRLGFE). The segment covering 32-51 (SRKRERRPRDRRRGRKCGRG) has biased composition (basic residues).

This sequence belongs to the universal ribosomal protein uL15 family. As to quaternary structure, component of the mitochondrial ribosome large subunit (39S) which comprises a 16S rRNA and about 50 distinct proteins.

The protein resides in the mitochondrion. This chain is Large ribosomal subunit protein uL15m (Mrpl15), found in Mus musculus (Mouse).